Here is a 480-residue protein sequence, read N- to C-terminus: Major facilitator superfamily domain-containing protein 12 (480 aa).

At M1 the chain carries N-acetylmethionine. Residues 1–26 (MGPGPPAAGAAPSPRPLSLVARLSYA) are Cytoplasmic-facing. The helical transmembrane segment at 27-47 (VGHFLNDLCASMWFTYLLLYL) threads the bilayer. Residues 48–56 (HSVRAYSSR) lie on the Lumenal side of the membrane. The helical transmembrane segment at 57-77 (GAGLLLLLGQVADGLCTPLVG) threads the bilayer. The Cytoplasmic portion of the chain corresponds to 78 to 97 (YEADRAASCCARYGPRKAWH). The helical transmembrane segment at 98–118 (LVGTVCVLLSFPFIFSPCLGC) threads the bilayer. The Lumenal segment spans residues 119 to 124 (GAATPE). The chain crosses the membrane as a helical span at residues 125–145 (WAALLYYGPFIVIFQFGWAST). Residues 146–170 (QISHLSLIPELVTNDHEKVELTALR) are Cytoplasmic-facing. The helical transmembrane segment at 171 to 191 (YAFTVVANITVYGAAWLLLHL) threads the bilayer. Topologically, residues 192-218 (QGSSRVEPTQDISISDQLGGQDVPVFR) are lumenal. A helical transmembrane segment spans residues 219–239 (NLSLLVVGVGAVFSLLFHLGT). At 240–279 (RERRRPHAEEPGEHTPLLAPATAQPLLLWKHWLREPAFYQ) the chain is on the cytoplasmic side. T254 carries the phosphothreonine; by MTOR modification. Residues 280–302 (VGILYMTTRLIVNLSQTYMAMYL) form a helical membrane-spanning segment. Residues 303–310 (TYSLHLPK) lie on the Lumenal side of the membrane. A helical transmembrane segment spans residues 311–331 (KFIATIPLVMYLSGFLSSFLM). The Cytoplasmic portion of the chain corresponds to 332-347 (KPINKCIGRNMTYFSG). 2 helical membrane-spanning segments follow: residues 348–368 (LLVI…GVAV) and 369–389 (YAAA…SLAM). At 390–402 (TADLIGPHTNSGA) the chain is on the cytoplasmic side. The helical transmembrane segment at 403–423 (FVYGSMSFLDKVANGLAVMAI) threads the bilayer. The Lumenal segment spans residues 424 to 446 (QSLHPCPSELCCRACVSFYHWAM). Residues 447–467 (VAVTGGVGVAAALCLCSLLLW) traverse the membrane as a helical segment. The Cytoplasmic portion of the chain corresponds to 468–480 (PTRLRRWDRDARP).

Belongs to the major facilitator superfamily. Phosphorylation at Thr-254 by MTOR via mTORC1 pathway promotes cysteine transport in lysosomes, thereby regulating lysosomal cysteine and cystine storage and redox homeostasis. In terms of tissue distribution, widely expressed, with high expression in primary melanocytes.

It is found in the melanosome membrane. It localises to the lysosome membrane. It catalyses the reaction L-cysteine(in) = L-cysteine(out). In terms of biological role, transporter that mediates the import of cysteine into melanosomes, thereby regulating skin pigmentation. In melanosomes, cysteine import is required both for normal levels of cystine, the oxidized dimer of cysteine, and provide cysteine for the production of the cysteinyldopas used in pheomelanin synthesis, thereby regulating skin pigmentation. Also catalyzes import of cysteine into lysosomes in non-pigmented cells, regulating lysosomal cystine and cysteine storage, which is essnetial for redox homeostasis. The chain is Major facilitator superfamily domain-containing protein 12 from Homo sapiens (Human).